Here is a 391-residue protein sequence, read N- to C-terminus: Pyoverdine export membrane fusion protein PvdR (391 aa).

Residues 1–24 form the signal peptide; sequence MRRTRSTRRALLVAVCLSPLIALA. Residues 108-180 adopt a coiled-coil conformation; the sequence is IEMLKAQLAE…QASLRSDEAE (73 aa). The tract at residues 263-289 is disordered; that stretch reads LPVPPKPLDQSNQGGGSPTSGSGGQSG. Positions 275–289 are enriched in gly residues; that stretch reads QGGGSPTSGSGGQSG.

It belongs to the membrane fusion protein (MFP) (TC 8.A.1) family. In terms of assembly, part of the tripartite efflux system PvdRT-OpmQ, which is composed of an inner membrane component with both ATPase and permease domains, PvdT, a periplasmic membrane fusion protein, PvdR, and an outer membrane component, OpmQ.

The protein localises to the periplasm. Part of the tripartite efflux system PvdRT-OpmQ required for the secretion into the extracellular milieu of the siderophore pyoverdine (PVD), which is involved in iron acquisition. This subunit is an adapter protein that stimulates the ATPase activity of PvdT and connects the inner and outer membrane components. The system is responsible for export of newly synthesized PVD after the final steps of biosynthesis have taken place in the periplasm. It is also responsible for recycling of PVD after internalization of ferri-PVD into the periplasm by the outer-membrane receptor FpvA and release of iron from PVD, thus making PVD available for new cycles of iron uptake. In addition, can expel unwanted metals complexed with PVD from the periplasm into the extracellular medium. Does not contribute to resistance to antibiotics belonging to the classes of tetracyclines, aminoglycosides, beta-lactams and macrolides, and chloramphenicol. The chain is Pyoverdine export membrane fusion protein PvdR from Pseudomonas aeruginosa (strain ATCC 15692 / DSM 22644 / CIP 104116 / JCM 14847 / LMG 12228 / 1C / PRS 101 / PAO1).